The sequence spans 284 residues: Acetyl-coenzyme A carboxylase carboxyl transferase subunit beta (284 aa).

Residues 25–284 (LWVKCPETGA…LCKILTKSVQ (260 aa)) enclose the CoA carboxyltransferase N-terminal domain.

It belongs to the AccD/PCCB family. As to quaternary structure, acetyl-CoA carboxylase is a heterohexamer composed of biotin carboxyl carrier protein (AccB), biotin carboxylase (AccC) and two subunits each of ACCase subunit alpha (AccA) and ACCase subunit beta (AccD).

The protein localises to the cytoplasm. It carries out the reaction N(6)-carboxybiotinyl-L-lysyl-[protein] + acetyl-CoA = N(6)-biotinyl-L-lysyl-[protein] + malonyl-CoA. The protein operates within lipid metabolism; malonyl-CoA biosynthesis; malonyl-CoA from acetyl-CoA: step 1/1. Its function is as follows. Component of the acetyl coenzyme A carboxylase (ACC) complex. Biotin carboxylase (BC) catalyzes the carboxylation of biotin on its carrier protein (BCCP) and then the CO(2) group is transferred by the transcarboxylase to acetyl-CoA to form malonyl-CoA. This is Acetyl-coenzyme A carboxylase carboxyl transferase subunit beta from Liberibacter asiaticus (strain psy62).